Consider the following 338-residue polypeptide: MDLKYKLGNDVIRIVTGKNILKDFACELNSGGNISIISRNVYKKYDLSFIKNRIIIDDGERAKSMEYLTLIINELLNKRVERGDSIIYIGGGTTGDLSGFAASIYKRGMGLIAVPTTLLAQVDSSIGGKNGINYMNIKNLIGTFYNPKLIIDDISFIDDKKLMMDGLAESLKMGITIEPELFNIINNDPDYIIENIERIITLSINAKLSIVSKDFHDKKHLRYVLNFGHTIGHALESYFNNNISHGEAVANGMIIEAYISKCLGNADISNEIRSIIKRLGFKIIDFRSVDINRLLEYIKNDKKSESGYINIVAVNGIGRYKIEALSPEEMLKILGGMP.

NAD(+) contacts are provided by residues 58 to 63 (DGERAK), 92 to 96 (GTTGD), 116 to 117 (TT), K129, and K138. Zn(2+) contacts are provided by E169, H229, and H245.

It belongs to the sugar phosphate cyclases superfamily. Dehydroquinate synthase family. NAD(+) serves as cofactor. It depends on Co(2+) as a cofactor. Zn(2+) is required as a cofactor.

The protein localises to the cytoplasm. The catalysed reaction is 7-phospho-2-dehydro-3-deoxy-D-arabino-heptonate = 3-dehydroquinate + phosphate. It participates in metabolic intermediate biosynthesis; chorismate biosynthesis; chorismate from D-erythrose 4-phosphate and phosphoenolpyruvate: step 2/7. Catalyzes the conversion of 3-deoxy-D-arabino-heptulosonate 7-phosphate (DAHP) to dehydroquinate (DHQ). The sequence is that of 3-dehydroquinate synthase from Picrophilus torridus (strain ATCC 700027 / DSM 9790 / JCM 10055 / NBRC 100828 / KAW 2/3).